A 149-amino-acid polypeptide reads, in one-letter code: Deoxyuridine 5'-triphosphate nucleotidohydrolase (149 aa).

Residues 68–70, N81, 85–87, and M95 contribute to the substrate site; these read RSG and LID.

Belongs to the dUTPase family. The cofactor is Mg(2+).

The catalysed reaction is dUTP + H2O = dUMP + diphosphate + H(+). It participates in pyrimidine metabolism; dUMP biosynthesis; dUMP from dCTP (dUTP route): step 2/2. This enzyme is involved in nucleotide metabolism: it produces dUMP, the immediate precursor of thymidine nucleotides and it decreases the intracellular concentration of dUTP so that uracil cannot be incorporated into DNA. The sequence is that of Deoxyuridine 5'-triphosphate nucleotidohydrolase from Bordetella pertussis (strain Tohama I / ATCC BAA-589 / NCTC 13251).